A 467-amino-acid polypeptide reads, in one-letter code: Argininosuccinate lyase (467 aa).

The protein belongs to the lyase 1 family. Argininosuccinate lyase subfamily.

Its subcellular location is the cytoplasm. The enzyme catalyses 2-(N(omega)-L-arginino)succinate = fumarate + L-arginine. It participates in amino-acid biosynthesis; L-arginine biosynthesis; L-arginine from L-ornithine and carbamoyl phosphate: step 3/3. The protein is Argininosuccinate lyase of Anaeromyxobacter dehalogenans (strain 2CP-C).